Here is a 150-residue protein sequence, read N- to C-terminus: D-aminoacyl-tRNA deacylase (150 aa).

A Gly-cisPro motif, important for rejection of L-amino acids motif is present at residues Gly-138–Pro-139.

Belongs to the DTD family. In terms of assembly, homodimer.

It localises to the cytoplasm. It catalyses the reaction glycyl-tRNA(Ala) + H2O = tRNA(Ala) + glycine + H(+). It carries out the reaction a D-aminoacyl-tRNA + H2O = a tRNA + a D-alpha-amino acid + H(+). Functionally, an aminoacyl-tRNA editing enzyme that deacylates mischarged D-aminoacyl-tRNAs. Also deacylates mischarged glycyl-tRNA(Ala), protecting cells against glycine mischarging by AlaRS. Acts via tRNA-based rather than protein-based catalysis; rejects L-amino acids rather than detecting D-amino acids in the active site. By recycling D-aminoacyl-tRNA to D-amino acids and free tRNA molecules, this enzyme counteracts the toxicity associated with the formation of D-aminoacyl-tRNA entities in vivo and helps enforce protein L-homochirality. The chain is D-aminoacyl-tRNA deacylase from Porphyromonas gingivalis (strain ATCC 33277 / DSM 20709 / CIP 103683 / JCM 12257 / NCTC 11834 / 2561).